Reading from the N-terminus, the 84-residue chain is UPF0297 protein Csac_1773 (84 aa).

The protein belongs to the UPF0297 family.

The chain is UPF0297 protein Csac_1773 from Caldicellulosiruptor saccharolyticus (strain ATCC 43494 / DSM 8903 / Tp8T 6331).